Reading from the N-terminus, the 407-residue chain is L-cysteine:1D-myo-inositol 2-amino-2-deoxy-alpha-D-glucopyranoside ligase (407 aa).

Positions 1–22 are disordered; that stretch reads MRSWSAPDIVPLPGTGGPLRVH. Residue Cys-43 coordinates Zn(2+). Residues 43 to 46, Thr-58, and 81 to 83 each bind L-cysteinyl-5'-AMP; these read CGIT and NTT. A 'HIGH' region motif is present at residues 45-55; the sequence is ITPYDAAHLGH. Residues 183-188 carry the 'ERGGDP' region motif; the sequence is ERGGDP. Residue Trp-223 coordinates L-cysteinyl-5'-AMP. Residue Cys-227 coordinates Zn(2+). 245-247 contributes to the L-cysteinyl-5'-AMP binding site; sequence GSD. His-252 provides a ligand contact to Zn(2+). Val-278 serves as a coordination point for L-cysteinyl-5'-AMP. Residues 284 to 288 carry the 'KMSKS' region motif; that stretch reads KMSKS.

Belongs to the class-I aminoacyl-tRNA synthetase family. MshC subfamily. In terms of assembly, monomer. Requires Zn(2+) as cofactor.

The catalysed reaction is 1D-myo-inositol 2-amino-2-deoxy-alpha-D-glucopyranoside + L-cysteine + ATP = 1D-myo-inositol 2-(L-cysteinylamino)-2-deoxy-alpha-D-glucopyranoside + AMP + diphosphate + H(+). Catalyzes the ATP-dependent condensation of GlcN-Ins and L-cysteine to form L-Cys-GlcN-Ins. The protein is L-cysteine:1D-myo-inositol 2-amino-2-deoxy-alpha-D-glucopyranoside ligase of Nocardiopsis dassonvillei (strain ATCC 23218 / DSM 43111 / CIP 107115 / JCM 7437 / KCTC 9190 / NBRC 14626 / NCTC 10488 / NRRL B-5397 / IMRU 509) (Actinomadura dassonvillei).